Reading from the N-terminus, the 372-residue chain is Putative glutamate--cysteine ligase 2 (372 aa).

The protein belongs to the glutamate--cysteine ligase type 2 family. YbdK subfamily.

It carries out the reaction L-cysteine + L-glutamate + ATP = gamma-L-glutamyl-L-cysteine + ADP + phosphate + H(+). ATP-dependent carboxylate-amine ligase which exhibits weak glutamate--cysteine ligase activity. The chain is Putative glutamate--cysteine ligase 2 from Rhodopirellula baltica (strain DSM 10527 / NCIMB 13988 / SH1).